The following is a 626-amino-acid chain: Chaperone protein DnaK (626 aa).

The residue at position 197 (T197) is a Phosphothreonine; by autocatalysis. Residues 595–614 are compositionally biased toward low complexity; that stretch reads QNMAQQQQAQGGAQQQNQNK. The interval 595–626 is disordered; sequence QNMAQQQQAQGGAQQQNQNKGGDDDVIDAEVE.

Belongs to the heat shock protein 70 family.

In terms of biological role, acts as a chaperone. The polypeptide is Chaperone protein DnaK (Nautilia profundicola (strain ATCC BAA-1463 / DSM 18972 / AmH)).